The chain runs to 559 residues: Germacrene A synthase 1 (559 aa).

Mg(2+) is bound by residues Asp312, Asp316, Asp456, Thr460, and Glu464. The DDXXD motif motif lies at 312 to 316 (DDTYD).

It belongs to the terpene synthase family. Monomer. Requires Mg(2+) as cofactor. In terms of tissue distribution, mainly expressed in sunflower trichomes.

It catalyses the reaction (2E,6E)-farnesyl diphosphate = (+)-(R)-germacrene A + diphosphate. The protein operates within secondary metabolite biosynthesis; terpenoid biosynthesis. Sesquiterpene synthase involved in germacrene A biosynthesis. Germacrene A is a precursor of several sesquiterpene lactones. This chain is Germacrene A synthase 1, found in Helianthus annuus (Common sunflower).